The chain runs to 185 residues: Ribosome-recycling factor (185 aa).

This sequence belongs to the RRF family.

It is found in the cytoplasm. In terms of biological role, responsible for the release of ribosomes from messenger RNA at the termination of protein biosynthesis. May increase the efficiency of translation by recycling ribosomes from one round of translation to another. This chain is Ribosome-recycling factor, found in Chromohalobacter salexigens (strain ATCC BAA-138 / DSM 3043 / CIP 106854 / NCIMB 13768 / 1H11).